The chain runs to 425 residues: Serine--tRNA ligase (425 aa).

L-serine is bound at residue 230–232 (TGE). ATP is bound at residue 261–263 (RKE). Glutamate 284 is an L-serine binding site. 348 to 351 (EISS) lines the ATP pocket. An L-serine-binding site is contributed by serine 385.

Belongs to the class-II aminoacyl-tRNA synthetase family. Type-1 seryl-tRNA synthetase subfamily. Homodimer. The tRNA molecule binds across the dimer.

It localises to the cytoplasm. It carries out the reaction tRNA(Ser) + L-serine + ATP = L-seryl-tRNA(Ser) + AMP + diphosphate + H(+). The catalysed reaction is tRNA(Sec) + L-serine + ATP = L-seryl-tRNA(Sec) + AMP + diphosphate + H(+). Its pathway is aminoacyl-tRNA biosynthesis; selenocysteinyl-tRNA(Sec) biosynthesis; L-seryl-tRNA(Sec) from L-serine and tRNA(Sec): step 1/1. Functionally, catalyzes the attachment of serine to tRNA(Ser). Is also able to aminoacylate tRNA(Sec) with serine, to form the misacylated tRNA L-seryl-tRNA(Sec), which will be further converted into selenocysteinyl-tRNA(Sec). This Wolbachia sp. subsp. Brugia malayi (strain TRS) protein is Serine--tRNA ligase.